We begin with the raw amino-acid sequence, 67 residues long: Small ribosomal subunit protein bS21 (67 aa).

This sequence belongs to the bacterial ribosomal protein bS21 family.

The polypeptide is Small ribosomal subunit protein bS21 (Hydrogenobaculum sp. (strain Y04AAS1)).